The following is a 507-amino-acid chain: MLNADLKQQLKQLLELMEGNVEFVASLGSDEKSKELKELLTEISDMSPRLSLSEKSLKRTPSFSVNRPGEETGVTFAGIPLGHEFNSLVLAILQVSGRAPKEKQSIIDQIKNLEGSFHFETFISLTCQKCPDVVQALNLMSVINPNITHSMIDGAVFREESENIMAVPAVFLNGEEFGNGRMTIQDILSKLGSTADASEFENKEPYDVLIVGGGPASGSAAIYTARKGLRTGIVADRIGGQVNDTAGIENFITVKETTGSEFSSNLAAHIDQYDIDAMTGIRATDIEKTDEAIKVTLENGAVLESKTVIIATGAGWRKLNIPGEEQLINKGVAFCPHCDGPLFENKDVAVIGGGNSGVEAAIDLAGIVNHVTLFEFASELKADNVLQDRLRSLSNVDIKTNAKTTEVVGEDHVTGIRYEDMSTGEEHLLNLDGIFVQIGLLPNTSWLKDAVELNERGEIVIDRNNNTNVPGIFAAGDVTDQKNKQIIISMGAGANAALNAFDYIIRN.

D207–I222 provides a ligand contact to FAD. A disulfide bridge links C335 with C338. D347–A361 provides a ligand contact to NAD(+). T467–D477 is an FAD binding site.

The protein belongs to the class-II pyridine nucleotide-disulfide oxidoreductase family. As to quaternary structure, homodimer. The cofactor is FAD.

In terms of biological role, serves to protect the cell against DNA damage by alkyl hydroperoxides. It can use either NADH or NADPH as electron donor for direct reduction of redox dyes or of alkyl hydroperoxides when combined with the AhpC protein. The protein is Alkyl hydroperoxide reductase subunit F (ahpF) of Staphylococcus aureus (strain Mu50 / ATCC 700699).